Reading from the N-terminus, the 69-residue chain is Conotoxin Lp3.1 (69 aa).

Positions 1-20 (MLKMGVLLFIFLVLFPLTTL) are cleaved as a signal peptide. A propeptide spanning residues 21–54 (ELDTDRPVERHAAIKQDLKPQERRGIRLHAPRDE) is cleaved from the precursor. 3 disulfides stabilise this stretch: cysteine 55–cysteine 67, cysteine 56–cysteine 65, and cysteine 61–cysteine 68.

This sequence belongs to the conotoxin M superfamily. Expressed by the venom duct.

It localises to the secreted. The protein is Conotoxin Lp3.1 of Conus leopardus (Leopard cone).